Reading from the N-terminus, the 182-residue chain is ATP-dependent protease subunit HslV (182 aa).

Residue T12 is part of the active site. A167, C170, and T173 together coordinate Na(+).

This sequence belongs to the peptidase T1B family. HslV subfamily. A double ring-shaped homohexamer of HslV is capped on each side by a ring-shaped HslU homohexamer. The assembly of the HslU/HslV complex is dependent on binding of ATP.

It is found in the cytoplasm. The enzyme catalyses ATP-dependent cleavage of peptide bonds with broad specificity.. Allosterically activated by HslU binding. In terms of biological role, protease subunit of a proteasome-like degradation complex believed to be a general protein degrading machinery. The protein is ATP-dependent protease subunit HslV of Chlorobium phaeobacteroides (strain DSM 266 / SMG 266 / 2430).